The following is a 271-amino-acid chain: Probable diacyglycerol O-acyltransferase tgs3 (271 aa).

This sequence belongs to the long-chain O-acyltransferase family.

It carries out the reaction an acyl-CoA + a 1,2-diacyl-sn-glycerol = a triacyl-sn-glycerol + CoA. It participates in glycerolipid metabolism; triacylglycerol biosynthesis. Functionally, catalyzes the terminal and only committed step in triacylglycerol synthesis by using diacylglycerol and fatty acyl CoA as substrates. Required for storage lipid synthesis. This chain is Probable diacyglycerol O-acyltransferase tgs3 (tgs3), found in Mycobacterium tuberculosis (strain CDC 1551 / Oshkosh).